A 428-amino-acid chain; its full sequence is MSLDLPPPPARGCRSTEVLKERGQREVFCGLTGIIWLHRKMQDAFFLVVGSRTCAHLLQSAAGVMIFAEPRFGTAVLEEKDLAGLADANAELDREVDRLLARRPDIRQLFLVGSCPSEVIKLDLHRAAERLSAHHGPAVRVYNFSGSGIETTFTQGEDACLASIVPTLPATEARELLLVGALPDVVEDQAVSLLTQLGIGPVRCLPAHHAAEAPGVGPNTVFALVQPFLGDTHGALTRRGARHIAAPFPFGEEGTTLWLKAIADEFGVSAETFEAVTAAPRARARKAVAAASEGLRGKSVFFLPDSQLEPSLARFLTRECGMSAVEVGTPFLHRGILGPDLDLLAEGPVLSEGQDVERQLDRVRAARPDLTVCGLGLANPLEAEGFTTKWAIELVFTPVHFYEQAGDLAGLFSRPVRRRAILRREAAE.

Positions 29, 54, and 115 each coordinate [4Fe-4S] cluster.

The protein belongs to the BchN/ChlN family. As to quaternary structure, protochlorophyllide reductase is composed of three subunits; BchL, BchN and BchB. Forms a heterotetramer of two BchB and two BchN subunits. The cofactor is [4Fe-4S] cluster.

The enzyme catalyses chlorophyllide a + oxidized 2[4Fe-4S]-[ferredoxin] + 2 ADP + 2 phosphate = protochlorophyllide a + reduced 2[4Fe-4S]-[ferredoxin] + 2 ATP + 2 H2O. The protein operates within porphyrin-containing compound metabolism; bacteriochlorophyll biosynthesis (light-independent). In terms of biological role, component of the dark-operative protochlorophyllide reductase (DPOR) that uses Mg-ATP and reduced ferredoxin to reduce ring D of protochlorophyllide (Pchlide) to form chlorophyllide a (Chlide). This reaction is light-independent. The NB-protein (BchN-BchB) is the catalytic component of the complex. This Cereibacter sphaeroides (strain KD131 / KCTC 12085) (Rhodobacter sphaeroides) protein is Light-independent protochlorophyllide reductase subunit N.